A 506-amino-acid polypeptide reads, in one-letter code: Anaerobic nitric oxide reductase transcription regulator NorR (506 aa).

Aspartate 57 carries the 4-aspartylphosphate modification. A Sigma-54 factor interaction domain is found at 187-416 (MIGLSPAMTQ…LEHAIHRAVV (230 aa)). ATP contacts are provided by residues 215-222 (GETGTGKE) and 278-287 (ADNGTLFLDE). The segment at residues 481-500 (WAASARALETDVANLHRLAK) is a DNA-binding region (H-T-H motif).

It functions in the pathway nitrogen metabolism; nitric oxide reduction. In terms of biological role, required for the expression of anaerobic nitric oxide (NO) reductase, acts as a transcriptional activator for at least the norVW operon. Activation also requires sigma-54. In Salmonella paratyphi C (strain RKS4594), this protein is Anaerobic nitric oxide reductase transcription regulator NorR.